Consider the following 224-residue polypeptide: Transcription factor MYB1 (224 aa).

HTH myb-type domains lie at Leu-10 to Ile-66 and Lys-67 to His-117. 2 consecutive DNA-binding regions (H-T-H motif) follow at residues Trp-38–Leu-62 and Trp-90–Leu-113.

Its subcellular location is the nucleus. In terms of biological role, activates DODA1 and CYP76AD1 in the betalain red pigment pathway. The sequence is that of Transcription factor MYB1 from Beta vulgaris (Sugar beet).